We begin with the raw amino-acid sequence, 279 residues long: Thymidylate synthase (279 aa).

133-134 (RR) contributes to the dUMP binding site. Residue C154 is the Nucleophile of the active site. DUMP is bound by residues 178-181 (RSND), N189, and 219-221 (HIY). D181 is a binding site for (6R)-5,10-methylene-5,6,7,8-tetrahydrofolate. A278 contributes to the (6R)-5,10-methylene-5,6,7,8-tetrahydrofolate binding site.

This sequence belongs to the thymidylate synthase family. Bacterial-type ThyA subfamily. In terms of assembly, homodimer.

It is found in the cytoplasm. The enzyme catalyses dUMP + (6R)-5,10-methylene-5,6,7,8-tetrahydrofolate = 7,8-dihydrofolate + dTMP. Its pathway is pyrimidine metabolism; dTTP biosynthesis. Its function is as follows. Catalyzes the reductive methylation of 2'-deoxyuridine-5'-monophosphate (dUMP) to 2'-deoxythymidine-5'-monophosphate (dTMP) while utilizing 5,10-methylenetetrahydrofolate (mTHF) as the methyl donor and reductant in the reaction, yielding dihydrofolate (DHF) as a by-product. This enzymatic reaction provides an intracellular de novo source of dTMP, an essential precursor for DNA biosynthesis. The chain is Thymidylate synthase from Streptococcus agalactiae serotype Ia (strain ATCC 27591 / A909 / CDC SS700).